The following is a 315-amino-acid chain: Energy-coupling factor transporter ATP-binding protein EcfA2 (315 aa).

One can recognise an ABC transporter domain in the interval 31 to 275; that stretch reads IILDNVSYTY…QELLSKIQIE (245 aa). 68–75 contacts ATP; it reads GTTGSGKS.

It belongs to the ABC transporter superfamily. Energy-coupling factor EcfA family. As to quaternary structure, forms a stable energy-coupling factor (ECF) transporter complex composed of 2 membrane-embedded substrate-binding proteins (S component), 2 ATP-binding proteins (A component) and 2 transmembrane proteins (T component).

It localises to the cell membrane. In terms of biological role, ATP-binding (A) component of a common energy-coupling factor (ECF) ABC-transporter complex. Unlike classic ABC transporters this ECF transporter provides the energy necessary to transport a number of different substrates. This Mesoplasma florum (strain ATCC 33453 / NBRC 100688 / NCTC 11704 / L1) (Acholeplasma florum) protein is Energy-coupling factor transporter ATP-binding protein EcfA2.